We begin with the raw amino-acid sequence, 310 residues long: tRNA-cytidine(32) 2-sulfurtransferase (310 aa).

The PP-loop motif signature appears at 45-50 (SGGKDS). C120, C123, and C211 together coordinate [4Fe-4S] cluster.

Belongs to the TtcA family. Homodimer. Mg(2+) serves as cofactor. The cofactor is [4Fe-4S] cluster.

The protein localises to the cytoplasm. It catalyses the reaction cytidine(32) in tRNA + S-sulfanyl-L-cysteinyl-[cysteine desulfurase] + AH2 + ATP = 2-thiocytidine(32) in tRNA + L-cysteinyl-[cysteine desulfurase] + A + AMP + diphosphate + H(+). It participates in tRNA modification. In terms of biological role, catalyzes the ATP-dependent 2-thiolation of cytidine in position 32 of tRNA, to form 2-thiocytidine (s(2)C32). The sulfur atoms are provided by the cysteine/cysteine desulfurase (IscS) system. The protein is tRNA-cytidine(32) 2-sulfurtransferase of Shewanella oneidensis (strain ATCC 700550 / JCM 31522 / CIP 106686 / LMG 19005 / NCIMB 14063 / MR-1).